The sequence spans 438 residues: MKYTDTAPKLFMNTGTKFPRRIIWSMGVLKKSCAKVNADLGLLDKKIADSIIKASDDLIDGKLDDKIVLDVFQTGSGTGLNMNVNEVIAEVASSYSNLKVHPNDHVNFGQSSNDTVPTAIRIAAVAEVTNRLLPALQQIISSLNKKAEEYKDVIKAGRTHLRDALPVTLGQELSAYADAFQHEHEQVMNILEYVKELPIGGTATGTGLNSHPEFQERVINEINRITGLGFKPANRFRAMRLLTDLLLLSGALRNIAVDLYRLGQDIRLMFSGPLTGLNEIDLPTQEEIAGSSIMPGKTNPVTVEATLLISAQVVGLDHANQFASMLGEFELSMGIPLVGYNIVTQVNFISEALEKMSRLVIDGMVANVEKMKRYAESSPSLITIVSPVIGYDKATEIGKKLNKGMSIREALRELGYSDNEINKILDLSKLVKPGFTAK.

Substrate-binding positions include 76 to 78, 101 to 104, 111 to 113, and T159; these read SGT, HPND, and SSN. Residue H160 is the Proton donor/acceptor of the active site. S291 is an active-site residue. Residues S292 and 297 to 299 contribute to the substrate site; that span reads KTN.

This sequence belongs to the class-II fumarase/aspartase family. Fumarase subfamily. Homotetramer.

Its subcellular location is the cytoplasm. The catalysed reaction is (S)-malate = fumarate + H2O. It functions in the pathway carbohydrate metabolism; tricarboxylic acid cycle; (S)-malate from fumarate: step 1/1. Functionally, involved in the TCA cycle. Catalyzes the stereospecific interconversion of fumarate to L-malate. This Saccharolobus solfataricus (strain ATCC 35092 / DSM 1617 / JCM 11322 / P2) (Sulfolobus solfataricus) protein is Fumarate hydratase class II.